The primary structure comprises 185 residues: Large ribosomal subunit protein uL5 (185 aa).

Belongs to the universal ribosomal protein uL5 family. As to quaternary structure, part of the 50S ribosomal subunit; part of the 5S rRNA/L5/L18/L25 subcomplex. Contacts the 5S rRNA and the P site tRNA. Forms a bridge to the 30S subunit in the 70S ribosome.

Functionally, this is one of the proteins that bind and probably mediate the attachment of the 5S RNA into the large ribosomal subunit, where it forms part of the central protuberance. In the 70S ribosome it contacts protein S13 of the 30S subunit (bridge B1b), connecting the 2 subunits; this bridge is implicated in subunit movement. Contacts the P site tRNA; the 5S rRNA and some of its associated proteins might help stabilize positioning of ribosome-bound tRNAs. The chain is Large ribosomal subunit protein uL5 from Bacteroides fragilis (strain ATCC 25285 / DSM 2151 / CCUG 4856 / JCM 11019 / LMG 10263 / NCTC 9343 / Onslow / VPI 2553 / EN-2).